Reading from the N-terminus, the 408-residue chain is DNA-directed RNA polymerase subunit Rpo1C (408 aa).

Belongs to the RNA polymerase beta' chain family. In terms of assembly, part of the RNA polymerase complex.

It is found in the cytoplasm. The enzyme catalyses RNA(n) + a ribonucleoside 5'-triphosphate = RNA(n+1) + diphosphate. Functionally, DNA-dependent RNA polymerase (RNAP) catalyzes the transcription of DNA into RNA using the four ribonucleoside triphosphates as substrates. Forms part of the jaw domain. In Methanosarcina mazei (strain ATCC BAA-159 / DSM 3647 / Goe1 / Go1 / JCM 11833 / OCM 88) (Methanosarcina frisia), this protein is DNA-directed RNA polymerase subunit Rpo1C.